A 518-amino-acid polypeptide reads, in one-letter code: Glycerophosphoinositol transporter 1 (518 aa).

Over 1-44 (MEDKDITSVNEKEVNENTNPRIIKYDAERRATRTETSKKDKWKN) the chain is Cytoplasmic. The chain crosses the membrane as a helical span at residues 45–65 (IVTIIASGFALISDGYVNGSM). At 66–91 (SMLNKVFVMEYGKKNYSSKVSTRVSN) the chain is on the extracellular side. Asparagine 80 carries N-linked (GlcNAc...) asparagine glycosylation. The helical transmembrane segment at 92 to 112 (AALVGIIFGQFFMGIAADYYS) threads the bilayer. The Cytoplasmic segment spans residues 113–114 (RK). The chain crosses the membrane as a helical span at residues 115 to 136 (SCILVATAILVIGSALCAASHG). The Extracellular segment spans residues 137–138 (TT). Residues 139 to 159 (VPGMFWMLTVMRGLVGIGVGA) traverse the membrane as a helical segment. Residues 160-184 (EYPTSTLSANESANEYTTTKRGGIL) lie on the Cytoplasmic side of the membrane. The helical transmembrane segment at 185-205 (VMVTNLPLAFGGPFATIIFLI) threads the bilayer. Residues 206–216 (VYKICSGTKHL) are Extracellular-facing. A helical membrane pass occupies residues 217 to 237 (EAIWRTVFAIGCFWPLSVFYF). Residues 238 to 268 (RWKTATTEVYEKGRIKRNIPYFLALKFYWKR) lie on the Cytoplasmic side of the membrane. The chain crosses the membrane as a helical span at residues 269-289 (LLGTCGTWFMYDFVTFPNGIF). The Extracellular segment spans residues 290 to 306 (SSTIISSVIKDQNDLVK). A helical membrane pass occupies residues 307–327 (VAEWNLLLGVLAVLGVPIGAY). The Cytoplasmic portion of the chain corresponds to 328–335 (LSDRIGRK). Residues 336–356 (YTLMFGFSGYIIFGLIIGCAY) traverse the membrane as a helical segment. Topologically, residues 357–360 (DQLK) are extracellular. Residues 361–381 (KITPLFIIFYAFMNMLGNAGP) form a helical membrane-spanning segment. Residues 382 to 399 (GDMLGVISSEASATAVRG) lie on the Cytoplasmic side of the membrane. A helical membrane pass occupies residues 400 to 420 (VFYGLSAVTGKIGSVVGVECF). The Extracellular segment spans residues 421 to 430 (QPIRDNLGAR). Residues 431–451 (WTFIIAAICGLIGIIITYFFV) traverse the membrane as a helical segment. Residues 452-518 (PHSLESDLMK…IISVRQVDQS (67 aa)) lie on the Cytoplasmic side of the membrane.

It belongs to the major facilitator superfamily. Sugar transporter (TC 2.A.1.1) family.

It is found in the cell membrane. It carries out the reaction sn-glycerol 3-phosphocholine(out) = sn-glycerol 3-phosphocholine(in). The catalysed reaction is sn-glycero-3-phospho-1D-myo-inositol(out) = sn-glycero-3-phospho-1D-myo-inositol(in). Functionally, glycerophosphodiester transporter that mediates uptake of both glycerophosphoinositol (GroPIns) and glycerophosphocholine (GroPCho) as sources of the nutrients inositol and phosphate. This Saccharomyces cerevisiae (strain ATCC 204508 / S288c) (Baker's yeast) protein is Glycerophosphoinositol transporter 1.